The chain runs to 208 residues: MARYTGPVCRLCRREGMKLFLKGDRCYTGKCAIDRRAYAPGQHGQSRGKKPTEYGIQLREKQKVRRIYGVQEKQFRSYYDKANRQKGIVGENLLRLLERRLDNVVFQLGFATSRPEARQLVRHGHFTINGRRVDIPSFLVRVGDVVGVKEASKSSPRLKEILSSLDRTPPKWMNLDANAATGTIIALPDREDIQLPIQEHLIVEKYSR.

The 67-residue stretch at 99–165 folds into the S4 RNA-binding domain; sequence RRLDNVVFQL…PRLKEILSSL (67 aa).

It belongs to the universal ribosomal protein uS4 family. Part of the 30S ribosomal subunit. Contacts protein S5. The interaction surface between S4 and S5 is involved in control of translational fidelity.

In terms of biological role, one of the primary rRNA binding proteins, it binds directly to 16S rRNA where it nucleates assembly of the body of the 30S subunit. With S5 and S12 plays an important role in translational accuracy. In Desulfitobacterium hafniense (strain Y51), this protein is Small ribosomal subunit protein uS4.